The sequence spans 357 residues: Phosphoribosylformylglycinamidine cyclo-ligase (357 aa).

Belongs to the AIR synthase family.

It localises to the cytoplasm. The enzyme catalyses 2-formamido-N(1)-(5-O-phospho-beta-D-ribosyl)acetamidine + ATP = 5-amino-1-(5-phospho-beta-D-ribosyl)imidazole + ADP + phosphate + H(+). It functions in the pathway purine metabolism; IMP biosynthesis via de novo pathway; 5-amino-1-(5-phospho-D-ribosyl)imidazole from N(2)-formyl-N(1)-(5-phospho-D-ribosyl)glycinamide: step 2/2. In Rhizobium johnstonii (strain DSM 114642 / LMG 32736 / 3841) (Rhizobium leguminosarum bv. viciae), this protein is Phosphoribosylformylglycinamidine cyclo-ligase.